A 167-amino-acid polypeptide reads, in one-letter code: Crossover junction endodeoxyribonuclease RuvC (167 aa).

Residues Asp11, Glu71, and Asp143 contribute to the active site. Positions 11, 71, and 143 each coordinate Mg(2+).

The protein belongs to the RuvC family. Homodimer which binds Holliday junction (HJ) DNA. The HJ becomes 2-fold symmetrical on binding to RuvC with unstacked arms; it has a different conformation from HJ DNA in complex with RuvA. In the full resolvosome a probable DNA-RuvA(4)-RuvB(12)-RuvC(2) complex forms which resolves the HJ. The cofactor is Mg(2+).

The protein localises to the cytoplasm. It carries out the reaction Endonucleolytic cleavage at a junction such as a reciprocal single-stranded crossover between two homologous DNA duplexes (Holliday junction).. Functionally, the RuvA-RuvB-RuvC complex processes Holliday junction (HJ) DNA during genetic recombination and DNA repair. Endonuclease that resolves HJ intermediates. Cleaves cruciform DNA by making single-stranded nicks across the HJ at symmetrical positions within the homologous arms, yielding a 5'-phosphate and a 3'-hydroxyl group; requires a central core of homology in the junction. The consensus cleavage sequence is 5'-(A/T)TT(C/G)-3'. Cleavage occurs on the 3'-side of the TT dinucleotide at the point of strand exchange. HJ branch migration catalyzed by RuvA-RuvB allows RuvC to scan DNA until it finds its consensus sequence, where it cleaves and resolves the cruciform DNA. This chain is Crossover junction endodeoxyribonuclease RuvC, found in Hyphomonas neptunium (strain ATCC 15444).